A 233-amino-acid polypeptide reads, in one-letter code: Preflagellin peptidase (233 aa).

Position 1 (Met-1) is a topological domain, cytoplasmic. The chain crosses the membrane as a helical span at residues 2-18 (IAYAIGLLGLLIASIQD). Residues 19–23 (IKSRE) are Extracellular-facing. Residues 24 to 46 (IENYIWIGMAVIGLLLSTYLSFT) traverse the membrane as a helical segment. Over 47–49 (TGN) the chain is Cytoplasmic. Residues 50–72 (FMPIISSISGFIICFIIGYLMFV) traverse the membrane as a helical segment. Over 73-78 (LGIGGA) the chain is Extracellular. Residues 79–89 (DGKILMGMGAL) traverse the membrane as a helical segment. Over 90–110 (IPSYAFPVYSSLQPLYTMEYI) the chain is Cytoplasmic. The helical transmembrane segment at 111–139 (PWFPLLVFFNGVILMIVLPIYLFFKNLSN) threads the bilayer. Topologically, residues 140–207 (GVKPKKLKEY…QYVWATPELP (68 aa)) are extracellular. Residues 208 to 219 (LLVPIALSYIIT) form a helical membrane-spanning segment. The Cytoplasmic portion of the chain corresponds to 220 to 233 (PFLGDKILSIILPM).

Belongs to the peptidase A24 family. Archaeal preflagellin peptidase subfamily.

The protein resides in the cell membrane. The enzyme catalyses Cleaves the signal peptide of 3 to 12 amino acids from the N-terminal of preflagellin, usually at Arg-Gly-|- or Lys-Gly-|-, to release flagellin.. Cleaves the N-terminal leader peptide from preflagellins. The processing of preflagellins is necessary for assembly of flagellins into a flagellum structure. In Methanococcus voltae, this protein is Preflagellin peptidase (flaK).